The following is a 262-amino-acid chain: VPS74-like protein DDB_G0288371 (262 aa).

It belongs to the GOLPH3/VPS74 family.

The protein resides in the golgi apparatus. Its subcellular location is the golgi stack membrane. Functionally, phosphatidylinositol-4-phosphate-binding protein that links Golgi membranes to the cytoskeleton and may participate in the tensile force required for vesicle budding from the Golgi. Thereby, may play a role in Golgi membrane trafficking. May also bind to the coatomer to regulate Golgi membrane trafficking. May play a role in anterograde transport from the Golgi to the plasma membrane and regulate secretion. May be involved in vacuolar protein sorting. The chain is VPS74-like protein DDB_G0288371 from Dictyostelium discoideum (Social amoeba).